Consider the following 64-residue polypeptide: UPF0434 protein BAB2_0345 (64 aa).

This sequence belongs to the UPF0434 family.

This is UPF0434 protein BAB2_0345 from Brucella abortus (strain 2308).